The chain runs to 346 residues: Hydroxyproline O-galactosyltransferase HPGT3 (346 aa).

Over residues 1 to 10 (MESLPTTVPS) the composition is skewed to polar residues. The segment at 1 to 21 (MESLPTTVPSKSERRARSSKF) is disordered. At 1 to 28 (MESLPTTVPSKSERRARSSKFSQSSSKP) the chain is on the cytoplasmic side. The helical; Signal-anchor for type II membrane protein transmembrane segment at 29-45 (SVIMAFFSCVAWLYVAG) threads the bilayer. Topologically, residues 46 to 346 (RLWQDAENRV…IRQDKVCSVA (301 aa)) are lumenal.

It belongs to the glycosyltransferase 31 family. Mn(2+) is required as a cofactor. In terms of tissue distribution, expressed in roots, rosette leaves, cauline leaves, stems, flowers and siliques.

It localises to the golgi apparatus membrane. Its pathway is protein modification; protein glycosylation. Possesses hydroxyproline O-galactosyltransferase activity. Transfers galactose from UDP-galactose to hydroxyproline residues in the arabinogalactan proteins (AGPs). Is specific for AGPs containing non-contiguous peptidyl hydroxyproline residues. The addition of galactose onto the peptidyl hydroxyproline residues in AGP core proteins represents the first committed step in arabinogalactan polysaccharide addition. AGP glycans play essential roles in both vegetative and reproductive plant growth. The chain is Hydroxyproline O-galactosyltransferase HPGT3 from Arabidopsis thaliana (Mouse-ear cress).